Consider the following 364-residue polypeptide: Methylthioribose-1-phosphate isomerase (364 aa).

Residues Arg-53–Ala-55, Arg-90, and Gln-203 contribute to the substrate site. The active-site Proton donor is the Asp-244. Asn-254 to Lys-255 serves as a coordination point for substrate.

This sequence belongs to the eIF-2B alpha/beta/delta subunits family. MtnA subfamily.

It carries out the reaction 5-(methylsulfanyl)-alpha-D-ribose 1-phosphate = 5-(methylsulfanyl)-D-ribulose 1-phosphate. It participates in amino-acid biosynthesis; L-methionine biosynthesis via salvage pathway; L-methionine from S-methyl-5-thio-alpha-D-ribose 1-phosphate: step 1/6. Catalyzes the interconversion of methylthioribose-1-phosphate (MTR-1-P) into methylthioribulose-1-phosphate (MTRu-1-P). The chain is Methylthioribose-1-phosphate isomerase from Rhizobium meliloti (strain 1021) (Ensifer meliloti).